A 256-amino-acid polypeptide reads, in one-letter code: F-actin-capping protein subunit beta (256 aa).

M1 is subject to N-acetylmethionine.

Belongs to the F-actin-capping protein beta subunit family. As to quaternary structure, component of the F-actin capping complex, composed of a heterodimer of an alpha and a beta subunit.

It is found in the cytoplasm. The protein localises to the cytoskeleton. Its function is as follows. F-actin-capping proteins bind in a Ca(2+)-independent manner to the fast growing ends of actin filaments (barbed end) thereby blocking the exchange of subunits at these ends. Unlike other capping proteins (such as gelsolin and severin), these proteins do not sever actin filaments. This chain is F-actin-capping protein subunit beta, found in Arabidopsis thaliana (Mouse-ear cress).